The primary structure comprises 103 residues: Integration host factor subunit alpha (103 aa).

Residues 50–72 form a disordered region; the sequence is GNFNLRDKGERPGRNPKTGEEIP. Over residues 54–69 the composition is skewed to basic and acidic residues; it reads LRDKGERPGRNPKTGE.

It belongs to the bacterial histone-like protein family. As to quaternary structure, heterodimer of an alpha and a beta chain.

Its function is as follows. This protein is one of the two subunits of integration host factor, a specific DNA-binding protein that functions in genetic recombination as well as in transcriptional and translational control. In Coxiella burnetii (strain CbuK_Q154) (Coxiella burnetii (strain Q154)), this protein is Integration host factor subunit alpha.